Reading from the N-terminus, the 218-residue chain is MSGEASTPAQDPSVEPLDAAPVAAEPEVMSTETPAEGSLTDPAERLQQLEHELQTLKQEHETLQSQYMRIAADFDNFRKRQSRDQEDIRQQLVCSTLSEILPVVDNFERARQQLNPESEEAQALHRSYQGLYKQLVDVLKQQGVARMEVVGQLFDPTLHEAVLREESTEQPEDVVIEELQRGYHLNGKVLRHALVKVSMGPGPSADAEGAASAEAEDS.

Polar residues predominate over residues 1 to 10 (MSGEASTPAQ). Disordered regions lie at residues 1–44 (MSGE…DPAE) and 198–218 (SMGPGPSADAEGAASAEAEDS). Low complexity predominate over residues 200 to 218 (GPGPSADAEGAASAEAEDS).

The protein belongs to the GrpE family. Homodimer.

It is found in the cytoplasm. Its function is as follows. Participates actively in the response to hyperosmotic and heat shock by preventing the aggregation of stress-denatured proteins, in association with DnaK and GrpE. It is the nucleotide exchange factor for DnaK and may function as a thermosensor. Unfolded proteins bind initially to DnaJ; upon interaction with the DnaJ-bound protein, DnaK hydrolyzes its bound ATP, resulting in the formation of a stable complex. GrpE releases ADP from DnaK; ATP binding to DnaK triggers the release of the substrate protein, thus completing the reaction cycle. Several rounds of ATP-dependent interactions between DnaJ, DnaK and GrpE are required for fully efficient folding. The sequence is that of Protein GrpE from Parasynechococcus marenigrum (strain WH8102).